Here is a 46-residue protein sequence, read N- to C-terminus: Sperm protamine P1 (46 aa).

This sequence belongs to the protamine P1 family. As to expression, testis.

Its subcellular location is the nucleus. It localises to the chromosome. Its function is as follows. Protamines substitute for histones in the chromatin of sperm during the haploid phase of spermatogenesis. They compact sperm DNA into a highly condensed, stable and inactive complex. In Hypsugo savii (Savi's pipistrelle), this protein is Sperm protamine P1 (PRM1).